Here is a 106-residue protein sequence, read N- to C-terminus: Large ribosomal subunit protein eL30 (106 aa).

This sequence belongs to the eukaryotic ribosomal protein eL30 family. Component of the large ribosomal subunit. Mature ribosomes consist of a small (40S) and a large (60S) subunit. The 40S subunit contains about 32 different proteins and 1 molecule of RNA (18S). The 60S subunit contains 45 different proteins and 3 molecules of RNA (25S, 5.8S and 5S).

Its subcellular location is the cytoplasm. In terms of biological role, component of the ribosome, a large ribonucleoprotein complex responsible for the synthesis of proteins in the cell. The small ribosomal subunit (SSU) binds messenger RNAs (mRNAs) and translates the encoded message by selecting cognate aminoacyl-transfer RNA (tRNA) molecules. The large subunit (LSU) contains the ribosomal catalytic site termed the peptidyl transferase center (PTC), which catalyzes the formation of peptide bonds, thereby polymerizing the amino acids delivered by tRNAs into a polypeptide chain. The nascent polypeptides leave the ribosome through a tunnel in the LSU and interact with protein factors that function in enzymatic processing, targeting, and the membrane insertion of nascent chains at the exit of the ribosomal tunnel. This chain is Large ribosomal subunit protein eL30, found in Candida albicans (strain SC5314 / ATCC MYA-2876) (Yeast).